We begin with the raw amino-acid sequence, 589 residues long: Kelch-like protein 25 (589 aa).

The 69-residue stretch at Thr46–Glu114 folds into the BTB domain. A BACK domain is found at Cys149–Val250. Kelch repeat units follow at residues Thr296–Cys340, Lys341–Asn388, Cys389–Leu444, Leu446–Ser492, Ile494–Asn538, and Lys539–Lys585.

As to quaternary structure, component of the BCR(KLHL25) E3 ubiquitin ligase complex, at least composed of cul3, klhl25 and rbx1.

Its pathway is protein modification; protein ubiquitination. Its function is as follows. Substrate-specific adapter of a BCR (BTB-CUL3-RBX1) E3 ubiquitin ligase complex involved in various processes, such as translation homeostasis and lipid synthesis. The BCR(KLHL25) ubiquitin ligase complex acts by mediating ubiquitination of hypophosphorylated eif4ebp1 (4E-BP1): ubiquitination and subsequent degradation of hypophosphorylated EIF4EBP1 (4E-BP1) probably serves as a homeostatic mechanism to maintain translation and prevent eIF4E inhibition when eIF4E levels are low. The BCR(KLHL25) complex also acts as a regulator of lipid synthesis by mediating ubiquitination and degradation of ACLY, thereby inhibiting lipid synthesis. The polypeptide is Kelch-like protein 25 (Xenopus laevis (African clawed frog)).